The following is a 327-amino-acid chain: Interleukin-12 subunit beta (327 aa).

A signal peptide spans 1-22 (MHPQQLVVSWFSLVLLASPIVA). Residues 23–106 (IWELEKNVYI…LSRSLLLLHK (84 aa)) form the Ig-like C2-type domain. A disulfide bridge connects residues cysteine 50 and cysteine 90. Asparagine 223 carries an N-linked (GlcNAc...) asparagine glycan. The Fibronectin type-III domain occupies 238-327 (PPKNLQLRPL…WSEWASVSCS (90 aa)).

This sequence belongs to the IL-12B family. As to quaternary structure, heterodimer with IL12A; disulfide-linked. The heterodimer is known as interleukin IL-12. Heterodimer with IL23A; disulfide-linked. The heterodimer is known as interleukin IL-23. Also secreted as a monomer. Interacts with NBR1; this interaction promotes IL-12 secretion.

It localises to the secreted. In terms of biological role, cytokine that can act as a growth factor for activated T and NK cells, enhance the lytic activity of NK/lymphokine-activated killer cells, and stimulate the production of IFN-gamma by resting PBMC. The polypeptide is Interleukin-12 subunit beta (IL12B) (Bubalus carabanensis (Swamp type water buffalo)).